The sequence spans 291 residues: m-AAA protease-interacting protein 1, mitochondrial (291 aa).

Residues 1 to 96 (MALAARLLPL…SLPASPSRSY (96 aa)) constitute a mitochondrion transit peptide.

Interacts with AFG3L2. Interacts with SPG7. Interacts with SMDT1/EMRE (via the N-terminal transit peptide); interaction is direct and takes place before maturation of SMDT1/EMRE.

The protein resides in the mitochondrion matrix. In terms of biological role, promotes sorting of SMDT1/EMRE in mitochondria by ensuring its maturation. Interacts with the transit peptide region of SMDT1/EMRE precursor protein in the mitochondrial matrix, leading to protect it against protein degradation by YME1L1, thereby ensuring SMDT1/EMRE maturation by the mitochondrial processing peptidase (PMPCA and PMPCB). The protein is m-AAA protease-interacting protein 1, mitochondrial of Mus musculus (Mouse).